The sequence spans 366 residues: MTPEHLPTEQYEAQLAEKVVRLQSMMAPFSDLVPEVFRSPVSHYRMRAEFRIWHDGDDLYHIIFDQQTKSRIRVDSFPAASELINQLMTAMIAGVRNNPVLRHKLFQIDYLTTLSNQAVVSLLYHKKLDDEWRQEAEALRDALRAQNLNVHLIGRATKTKIELDQDYIDERLPVAGKEMIYRQVENSFTQPNAAMNIQMLEWALDVTKGSKGDLLELYCGNGNFSLALARNFDRVLATEIAKPSVAAAQYNIAANHIDNVQIIRMAAEEFTQAMNGVREFNRLQGIDLKSYQCETIFVDPPRSGLDSETEKMVQAYPRILYISCNPETLCKNLETLSQTHKVERLALFDQFPYTHHMECGVLLTAK.

Residues Gln190, Tyr218, Asn223, Glu239, and Asp299 each contribute to the S-adenosyl-L-methionine site. The Nucleophile role is filled by Cys324. Glu358 serves as the catalytic Proton acceptor.

The protein belongs to the class I-like SAM-binding methyltransferase superfamily. RNA M5U methyltransferase family. TrmA subfamily.

The enzyme catalyses uridine(54) in tRNA + S-adenosyl-L-methionine = 5-methyluridine(54) in tRNA + S-adenosyl-L-homocysteine + H(+). The catalysed reaction is uridine(341) in tmRNA + S-adenosyl-L-methionine = 5-methyluridine(341) in tmRNA + S-adenosyl-L-homocysteine + H(+). Dual-specificity methyltransferase that catalyzes the formation of 5-methyluridine at position 54 (m5U54) in all tRNAs, and that of position 341 (m5U341) in tmRNA (transfer-mRNA). The protein is tRNA/tmRNA (uracil-C(5))-methyltransferase of Escherichia coli (strain ATCC 8739 / DSM 1576 / NBRC 3972 / NCIMB 8545 / WDCM 00012 / Crooks).